The following is a 183-amino-acid chain: Chromophore lyase CpcT/CpeT 4 (183 aa).

It belongs to the CpcT/CpeT biliprotein lyase family.

Functionally, covalently attaches a chromophore to Cys residue(s) of phycobiliproteins. The sequence is that of Chromophore lyase CpcT/CpeT 4 from Gloeobacter violaceus (strain ATCC 29082 / PCC 7421).